The primary structure comprises 330 residues: DNA-directed RNA polymerase subunit alpha (330 aa).

Positions 1–235 (MVREKVKVST…DLFIHFLHAK (235 aa)) are alpha N-terminal domain (alpha-NTD). The segment at 270 to 330 (IALKYIFIDQ…KQILGILEKK (61 aa)) is alpha C-terminal domain (alpha-CTD).

This sequence belongs to the RNA polymerase alpha chain family. As to quaternary structure, in plastids the minimal PEP RNA polymerase catalytic core is composed of four subunits: alpha, beta, beta', and beta''. When a (nuclear-encoded) sigma factor is associated with the core the holoenzyme is formed, which can initiate transcription.

Its subcellular location is the plastid. The protein localises to the chloroplast. It carries out the reaction RNA(n) + a ribonucleoside 5'-triphosphate = RNA(n+1) + diphosphate. Its function is as follows. DNA-dependent RNA polymerase catalyzes the transcription of DNA into RNA using the four ribonucleoside triphosphates as substrates. The polypeptide is DNA-directed RNA polymerase subunit alpha (rpoA) (Gossypium barbadense (Sea Island cotton)).